Consider the following 879-residue polypeptide: Alanine--tRNA ligase (879 aa).

4 residues coordinate Zn(2+): histidine 565, histidine 569, cysteine 674, and histidine 678.

This sequence belongs to the class-II aminoacyl-tRNA synthetase family. Requires Zn(2+) as cofactor.

The protein localises to the cytoplasm. It carries out the reaction tRNA(Ala) + L-alanine + ATP = L-alanyl-tRNA(Ala) + AMP + diphosphate. Its function is as follows. Catalyzes the attachment of alanine to tRNA(Ala) in a two-step reaction: alanine is first activated by ATP to form Ala-AMP and then transferred to the acceptor end of tRNA(Ala). Also edits incorrectly charged Ser-tRNA(Ala) and Gly-tRNA(Ala) via its editing domain. The sequence is that of Alanine--tRNA ligase from Gluconobacter oxydans (strain 621H) (Gluconobacter suboxydans).